A 338-amino-acid chain; its full sequence is Mas-related G-protein coupled receptor member B2 (338 aa).

The Extracellular portion of the chain corresponds to 1–40 (MSGDFLIKNLSTSAWKTNITVLNGSYYIDTSVCVTRNQAM). N-linked (GlcNAc...) asparagine glycosylation is found at N9, N18, and N23. A helical membrane pass occupies residues 41–61 (ILLSIIISLVGMGLNAIVLWF). The Cytoplasmic segment spans residues 62 to 89 (LGIRMHTNAFTVYILNLAMADFLYLCSQ). The helical transmembrane segment at 90–110 (FVICLLIAFYIFYSIDINIPL) threads the bilayer. Position 111 (V111) is a topological domain, extracellular. The chain crosses the membrane as a helical span at residues 112–132 (LYVVPIFAYLSGLSILSTISI). At 133 to 157 (ERCLSVIWPIWYRCKRPRHTSAITC) the chain is on the cytoplasmic side. A helical membrane pass occupies residues 158 to 178 (FVLWVMSLLLGLLEGKACGLL). The Extracellular segment spans residues 179–191 (FNSFDSYWCETFD). A helical membrane pass occupies residues 192-212 (VITNIWSVVFFGVLCGSSLTL). At 213 to 231 (LVRIFCGSQRIPMTRLYVT) the chain is on the cytoplasmic side. Residues 232–252 (ITLTVLVFLIFGLPFGIYWIL) traverse the membrane as a helical segment. Over 253–268 (YQWISNFYYVEICNFY) the chain is Extracellular. The chain crosses the membrane as a helical span at residues 269–289 (LEILFLSCVNSCMNPIIYFLV). The Cytoplasmic portion of the chain corresponds to 290-338 (GSIRHRRFRRKTLKLLLQRAMQDTPEEEQSGNKSSSEHPEELETVQSCS). The disordered stretch occupies residues 310–338 (MQDTPEEEQSGNKSSSEHPEELETVQSCS).

The protein belongs to the G-protein coupled receptor 1 family. Mas subfamily. In terms of tissue distribution, mast cell-specific.

Its subcellular location is the cell membrane. Its function is as follows. Mast cell-specific receptor for basic secretagogues, i.e. cationic amphiphilic drugs, as well as endo- or exogenous peptides, consisting of a basic head group and a hydrophobic core. Recognizes and binds small molecules containing a cyclized tetrahydroisoquinoline (THIQ), such as non-steroidal neuromuscular blocking drugs (NMBDs), including tubocurarine and atracurium. In response to these compounds, mediates pseudo-allergic reactions characterized by histamine release, inflammation and airway contraction. This Mus musculus (Mouse) protein is Mas-related G-protein coupled receptor member B2 (Mrgprb2).